A 133-amino-acid polypeptide reads, in one-letter code: Small ribosomal subunit protein bS16 (133 aa).

Basic and acidic residues predominate over residues 83 to 101; the sequence is KRDARSNPKKAEPGKKAQE. Residues 83–102 are disordered; sequence KRDARSNPKKAEPGKKAQER.

Belongs to the bacterial ribosomal protein bS16 family.

The sequence is that of Small ribosomal subunit protein bS16 from Mesorhizobium japonicum (strain LMG 29417 / CECT 9101 / MAFF 303099) (Mesorhizobium loti (strain MAFF 303099)).